Consider the following 273-residue polypeptide: Phycocyanobilin lyase subunit alpha (273 aa).

Belongs to the CpcE/RpcE/PecE family. CpcE and CpcF associate to form a lyase.

Required for the chromophorylation of the cpcA gene product. The protein is Phycocyanobilin lyase subunit alpha (cpcE) of Synechococcus elongatus (strain ATCC 33912 / PCC 7942 / FACHB-805) (Anacystis nidulans R2).